The following is a 475-amino-acid chain: Ribulose bisphosphate carboxylase large chain (475 aa).

Residues 1–2 (MS) constitute a propeptide that is removed on maturation. Residue Pro-3 is modified to N-acetylproline. Residue Lys-14 is modified to N6,N6,N6-trimethyllysine. Residues Asn-123 and Thr-173 each coordinate substrate. Lys-175 serves as the catalytic Proton acceptor. Lys-177 contributes to the substrate binding site. Positions 201, 203, and 204 each coordinate Mg(2+). Position 201 is an N6-carboxylysine (Lys-201). His-294 acts as the Proton acceptor in catalysis. Positions 295, 327, and 379 each coordinate substrate.

This sequence belongs to the RuBisCO large chain family. Type I subfamily. As to quaternary structure, heterohexadecamer of 8 large chains and 8 small chains; disulfide-linked. The disulfide link is formed within the large subunit homodimers. Mg(2+) serves as cofactor. Post-translationally, the disulfide bond which can form in the large chain dimeric partners within the hexadecamer appears to be associated with oxidative stress and protein turnover.

It is found in the plastid. It localises to the chloroplast. The catalysed reaction is 2 (2R)-3-phosphoglycerate + 2 H(+) = D-ribulose 1,5-bisphosphate + CO2 + H2O. It catalyses the reaction D-ribulose 1,5-bisphosphate + O2 = 2-phosphoglycolate + (2R)-3-phosphoglycerate + 2 H(+). In terms of biological role, ruBisCO catalyzes two reactions: the carboxylation of D-ribulose 1,5-bisphosphate, the primary event in carbon dioxide fixation, as well as the oxidative fragmentation of the pentose substrate in the photorespiration process. Both reactions occur simultaneously and in competition at the same active site. In Illicium oligandrum (Star anise), this protein is Ribulose bisphosphate carboxylase large chain.